The sequence spans 276 residues: Digeranylgeranylglyceryl phosphate synthase (276 aa).

The next 5 helical transmembrane spans lie at 14-34 (VNTLAAGALTFIGAFVAGGAV), 90-110 (VVLFVGAAALAATLPVLAVCI), 144-164 (FVFGAAAVGSPLAGGVLAALA), 200-220 (ALAVSAVFVVGAAAASPVPYL), and 221-241 (VGVFGWWYLVAVCPGVVVMVV).

This sequence belongs to the UbiA prenyltransferase family. DGGGP synthase subfamily. The cofactor is Mg(2+).

Its subcellular location is the cell membrane. It carries out the reaction sn-3-O-(geranylgeranyl)glycerol 1-phosphate + (2E,6E,10E)-geranylgeranyl diphosphate = 2,3-bis-O-(geranylgeranyl)-sn-glycerol 1-phosphate + diphosphate. It functions in the pathway membrane lipid metabolism; glycerophospholipid metabolism. Its function is as follows. Prenyltransferase that catalyzes the transfer of the geranylgeranyl moiety of geranylgeranyl diphosphate (GGPP) to the C2 hydroxyl of (S)-3-O-geranylgeranylglyceryl phosphate (GGGP). This reaction is the second ether-bond-formation step in the biosynthesis of archaeal membrane lipids. The protein is Digeranylgeranylglyceryl phosphate synthase of Halobacterium salinarum (strain ATCC 29341 / DSM 671 / R1).